The chain runs to 267 residues: UPF0162 protein HI_1558 (267 aa).

It belongs to the UPF0162 family.

The polypeptide is UPF0162 protein HI_1558 (Haemophilus influenzae (strain ATCC 51907 / DSM 11121 / KW20 / Rd)).